The following is a 288-amino-acid chain: Probable HTH-type transcriptional regulator STM3175 (288 aa).

One can recognise an HTH araC/xylS-type domain in the interval 14–113; that stretch reads RRVCDHIERH…GQSPRRFRQS (100 aa). 2 consecutive DNA-binding regions (H-T-H motif) follow at residues 31-52 and 80-103; these read EALS…TTWS and VIDI…KTAF. The segment at 111–288 is putative effector binding domain; binds the peptide antibiotic albicidin; that stretch reads RQSPDWLAWH…LLTDIYLPLR (178 aa).

In terms of assembly, homodimer.

In terms of biological role, probable transcription factor. The polypeptide is Probable HTH-type transcriptional regulator STM3175 (Salmonella typhimurium (strain LT2 / SGSC1412 / ATCC 700720)).